Here is a 142-residue protein sequence, read N- to C-terminus: Hemoglobin cathodic subunit alpha (142 aa).

Serine 1 bears the N-acetylserine mark. In terms of domain architecture, Globin spans 1–142; that stretch reads SLTAKDKALV…LSSTAADKYR (142 aa). Histidine 59 is an O2 binding site. Histidine 88 contributes to the heme b binding site.

The protein belongs to the globin family. Heterotetramer of two alpha chains and two beta chains.

Functionally, involved in oxygen transport from gills to the various peripheral tissues. This Hoplosternum littorale (Hassar) protein is Hemoglobin cathodic subunit alpha.